The following is a 299-amino-acid chain: Phosphoribosylaminoimidazole-succinocarboxamide synthase (299 aa).

A disordered region spans residues 259-279; that stretch reads PESGWDRKSEQPPPPLPQHVV.

Belongs to the SAICAR synthetase family.

It carries out the reaction 5-amino-1-(5-phospho-D-ribosyl)imidazole-4-carboxylate + L-aspartate + ATP = (2S)-2-[5-amino-1-(5-phospho-beta-D-ribosyl)imidazole-4-carboxamido]succinate + ADP + phosphate + 2 H(+). The protein operates within purine metabolism; IMP biosynthesis via de novo pathway; 5-amino-1-(5-phospho-D-ribosyl)imidazole-4-carboxamide from 5-amino-1-(5-phospho-D-ribosyl)imidazole-4-carboxylate: step 1/2. In Streptomyces avermitilis (strain ATCC 31267 / DSM 46492 / JCM 5070 / NBRC 14893 / NCIMB 12804 / NRRL 8165 / MA-4680), this protein is Phosphoribosylaminoimidazole-succinocarboxamide synthase.